Reading from the N-terminus, the 539-residue chain is NADH-quinone oxidoreductase subunit N 2 (539 aa).

A run of 13 helical transmembrane segments spans residues 11-31, 52-72, 106-126, 141-161, 193-213, 248-268, 296-316, 329-349, 357-377, 385-405, 429-449, 462-484, and 500-520; these read LIPE…DVLT, LMGL…FSWM, PLTH…VILT, LILF…LIMI, YIFG…LLGL, GVAI…VAIV, AGFF…SILG, WTSL…LAAL, MLAY…VGTQ, LMYL…LALV, LLLT…GFFV, AKWL…LRFL, and VGFG…GLGI.

This sequence belongs to the complex I subunit 2 family. NDH-1 is composed of 14 different subunits. Subunits NuoA, H, J, K, L, M, N constitute the membrane sector of the complex.

Its subcellular location is the cell membrane. The enzyme catalyses a quinone + NADH + 5 H(+)(in) = a quinol + NAD(+) + 4 H(+)(out). Its function is as follows. NDH-1 shuttles electrons from NADH, via FMN and iron-sulfur (Fe-S) centers, to quinones in the respiratory chain. The immediate electron acceptor for the enzyme in this species is believed to be ubiquinone. Couples the redox reaction to proton translocation (for every two electrons transferred, four hydrogen ions are translocated across the cytoplasmic membrane), and thus conserves the redox energy in a proton gradient. The chain is NADH-quinone oxidoreductase subunit N 2 from Herpetosiphon aurantiacus (strain ATCC 23779 / DSM 785 / 114-95).